A 332-amino-acid chain; its full sequence is Biotin synthase (332 aa).

One can recognise a Radical SAM core domain in the interval 53–282 (YFGKKVKLNM…TKEIRISGGR (230 aa)). Residues C71, C75, and C78 each contribute to the [4Fe-4S] cluster site. [2Fe-2S] cluster-binding residues include C115, C147, C207, and R277.

This sequence belongs to the radical SAM superfamily. Biotin synthase family. Homodimer. The cofactor is [4Fe-4S] cluster. It depends on [2Fe-2S] cluster as a cofactor.

The enzyme catalyses (4R,5S)-dethiobiotin + (sulfur carrier)-SH + 2 reduced [2Fe-2S]-[ferredoxin] + 2 S-adenosyl-L-methionine = (sulfur carrier)-H + biotin + 2 5'-deoxyadenosine + 2 L-methionine + 2 oxidized [2Fe-2S]-[ferredoxin]. It functions in the pathway cofactor biosynthesis; biotin biosynthesis; biotin from 7,8-diaminononanoate: step 2/2. In terms of biological role, catalyzes the conversion of dethiobiotin (DTB) to biotin by the insertion of a sulfur atom into dethiobiotin via a radical-based mechanism. The chain is Biotin synthase from Bacillus thuringiensis (strain Al Hakam).